The following is a 640-amino-acid chain: Threonine--tRNA ligase (640 aa).

The 63-residue stretch at 1-63 (MSSVTVTLPD…SEDCEIEIVT (63 aa)) folds into the TGS domain. The tract at residues 242–533 (DHRKLGREMD…LIEHYNGRFP (292 aa)) is catalytic. Residues Cys-334, His-385, and His-510 each contribute to the Zn(2+) site.

Belongs to the class-II aminoacyl-tRNA synthetase family. In terms of assembly, homodimer. It depends on Zn(2+) as a cofactor.

It localises to the cytoplasm. It catalyses the reaction tRNA(Thr) + L-threonine + ATP = L-threonyl-tRNA(Thr) + AMP + diphosphate + H(+). Functionally, catalyzes the attachment of threonine to tRNA(Thr) in a two-step reaction: L-threonine is first activated by ATP to form Thr-AMP and then transferred to the acceptor end of tRNA(Thr). This Halobacterium salinarum (strain ATCC 29341 / DSM 671 / R1) protein is Threonine--tRNA ligase.